We begin with the raw amino-acid sequence, 66 residues long: U1-theraphotoxin-Cg1d 2 (66 aa).

The signal sequence occupies residues 1–21; that stretch reads MKMSALFPIFGLPLLFCNSFA. Residues 22–29 constitute a propeptide that is removed on maturation; the sequence is AELKATGR. Disulfide bonds link Cys31/Cys46, Cys38/Cys51, and Cys45/Cys58. Pro63 carries the proline amide modification.

It belongs to the neurotoxin 10 (Hwtx-1) family. 46 (Jztx-7/10/12) subfamily. In terms of tissue distribution, expressed by the venom gland.

It localises to the secreted. In terms of biological role, probable ion channel inhibitor. The polypeptide is U1-theraphotoxin-Cg1d 2 (Chilobrachys guangxiensis (Chinese earth tiger tarantula)).